A 341-amino-acid polypeptide reads, in one-letter code: MSKRVRSSLILPAVCGLGLAAVLLSSCSSKAPQQPARQAGISGPGDYSRPHRDGAPWWDVDVSRIPDAVPMPHNGSVKANPYTVLGKTYYPMNDARAYRMVGTASWYGTKFHGQATANGETYDLYGMTAAHKTLPLPSYVRVTNLDNGKSVIVRVNDRGPFYSDRVIDLSFAAAKKLGYAETGTARVKVEGIDPVQWWAQRGRPAPMVLAQPKQAVAQAPAATQTQAVAMAQPIETYTPPPAQHAAAVLPVQIDSKKNASLPADGLYLQVGAFANPDAAELLKAKLSGVTAAPVFISSVVRNQQILHRVRLGPIGSADEVSRTQDSIRVANLGQPTLVRPD.

The signal sequence occupies residues 1 to 26; the sequence is MSKRVRSSLILPAVCGLGLAAVLLSS. Residue C27 is the site of N-palmitoyl cysteine attachment. C27 carries S-diacylglycerol cysteine lipidation. Residues 260–341 form the SPOR domain; sequence SLPADGLYLQ…LGQPTLVRPD (82 aa).

It belongs to the RlpA family.

Its subcellular location is the cell membrane. Lytic transglycosylase with a strong preference for naked glycan strands that lack stem peptides. Required for efficient separation of daughter cells and maintenance of rod shape. The sequence is that of Endolytic peptidoglycan transglycosylase RlpA from Pseudomonas aeruginosa (strain UCBPP-PA14).